The following is a 735-amino-acid chain: Transcription factor RFX4 (735 aa).

The disordered stretch occupies residues 27 to 59 (NKRYSSHTSLGNVSNDENEEKENNRASKPHSTP). The span at 32 to 41 (SHTSLGNVSN) shows a compositional bias: polar residues. The DNA-binding element occupies 44–126 (NEEKENNRAS…RRLGTRGQSK (83 aa)). Positions 61-136 (TLQWLEENYE…YHYYGIAVKE (76 aa)) form a DNA-binding region, RFX-type winged-helix. The tract at residues 315-487 (RFSQILRRQT…NELMRAMKGE (173 aa)) is necessary for dimerization. Residues 501–538 (EATPPTPSPGPSFSPAKSATSVEVPPPSSPVSNPSPEY) form a disordered region.

The protein belongs to the RFX family. Homodimer. Heterodimer with RFX2 and RFX3. Binds DNA. Interacts with GPS2. In terms of tissue distribution, isoform 1: Brain-specific. Isoform 2: Testis-specific. Isoform 1: Highly expressed in the suprachiasmatic nucleus, the central pacemaker site of the circadian clock (at protein level).

It is found in the nucleus. Transcription factor that plays a role in early brain development. May activate transcription by interacting directly with the X-box. May activate transcription from CX3CL1 promoter through the X-box during brain development. May be required for neural tube ciliogenesis during embryogenesis. This chain is Transcription factor RFX4 (Rfx4), found in Mus musculus (Mouse).